A 116-amino-acid chain; its full sequence is Phosphoribosyl-AMP cyclohydrolase (116 aa).

Residue D78 coordinates Mg(2+). C79 provides a ligand contact to Zn(2+). Mg(2+) is bound by residues D80 and D82. Zn(2+) contacts are provided by C95 and C102.

This sequence belongs to the PRA-CH family. Homodimer. Mg(2+) serves as cofactor. It depends on Zn(2+) as a cofactor.

Its subcellular location is the cytoplasm. It carries out the reaction 1-(5-phospho-beta-D-ribosyl)-5'-AMP + H2O = 1-(5-phospho-beta-D-ribosyl)-5-[(5-phospho-beta-D-ribosylamino)methylideneamino]imidazole-4-carboxamide. Its pathway is amino-acid biosynthesis; L-histidine biosynthesis; L-histidine from 5-phospho-alpha-D-ribose 1-diphosphate: step 3/9. Its function is as follows. Catalyzes the hydrolysis of the adenine ring of phosphoribosyl-AMP. The polypeptide is Phosphoribosyl-AMP cyclohydrolase (Acidiphilium cryptum (strain JF-5)).